The following is a 281-amino-acid chain: Phosphatidylglycerol--prolipoprotein diacylglyceryl transferase (281 aa).

3 consecutive transmembrane segments (helical) span residues 11-31 (IIFTIGPVSARWYGFMYVISF), 57-77 (LLYSIFLGSCIGGRIGYIIFY), and 89-109 (VFYIWEGGMSFHGGLIGAIIV). Arg-140 contributes to the a 1,2-diacyl-sn-glycero-3-phospho-(1'-sn-glycerol) binding site. 3 helical membrane-spanning segments follow: residues 194–214 (PTQLYEFFLEGILLFFIIYFF), 222–242 (GSISGLFLIFYGLFRIFIEFF), and 255–275 (IITMGQILSLPMIIAGLIIMY).

Belongs to the Lgt family.

It localises to the cell inner membrane. The enzyme catalyses L-cysteinyl-[prolipoprotein] + a 1,2-diacyl-sn-glycero-3-phospho-(1'-sn-glycerol) = an S-1,2-diacyl-sn-glyceryl-L-cysteinyl-[prolipoprotein] + sn-glycerol 1-phosphate + H(+). It participates in protein modification; lipoprotein biosynthesis (diacylglyceryl transfer). Its function is as follows. Catalyzes the transfer of the diacylglyceryl group from phosphatidylglycerol to the sulfhydryl group of the N-terminal cysteine of a prolipoprotein, the first step in the formation of mature lipoproteins. The protein is Phosphatidylglycerol--prolipoprotein diacylglyceryl transferase of Buchnera aphidicola subsp. Acyrthosiphon pisum (strain APS) (Acyrthosiphon pisum symbiotic bacterium).